Here is a 353-residue protein sequence, read N- to C-terminus: uncharacterized protein (353 aa).

Cys-40, His-70, Cys-100, Cys-103, Cys-106, Cys-114, and Cys-158 together coordinate Zn(2+).

The protein belongs to the zinc-containing alcohol dehydrogenase family. Requires Zn(2+) as cofactor.

This is an uncharacterized protein from Escherichia coli (strain K12).